We begin with the raw amino-acid sequence, 195 residues long: O-methyltransferase (195 aa).

The protein belongs to the methyltransferase superfamily.

It participates in secondary metabolite biosynthesis. In terms of biological role, O-methyltransferase; part of the gene cluster that mediates the biosynthesis of pyrophen and campyrone B, which represent a class of fungal amino acid-derived alpha-pyrone natural products. The first step of pyrophen biosynthesis is catalyzed by the PKS-NRPS hybrid synthetase ATPKS that uptakes and condensates L-phenylalanine and malonyl-CoA in order to produce desmethyldesacetylpyrophen. Although the A domain does not discriminate between 2 enantiomeric phenylalanines, the downstream KS domain must play a gate keeping role to stereoselectively accept the L-phenylalanyl-S-phosphopantetheine (Ppant)-T domain intermediate for chain elongation. The resulting amino acid derived diketide is off-loaded through lactonization to yield the alpha-pyrone intermediate desmethyldesacetylpyrophen. The cluster-specific O-methyltransferase (OMT) then methylates desmethyldesacetylpyrophen to desacetylpyrophen, which is further acetylated to pyrophen by an endogenous yet unidentified N-acetyltransferase. ATPKS has relaxed substrate specificity to activate and extend branched-chain amino acid L-leucine to produce small amounts of campyrone B. This Aspergillus niger (strain ATCC 1015 / CBS 113.46 / FGSC A1144 / LSHB Ac4 / NCTC 3858a / NRRL 328 / USDA 3528.7) protein is O-methyltransferase.